A 165-amino-acid polypeptide reads, in one-letter code: Chorismate pyruvate-lyase (165 aa).

The substrate site is built by M35, R77, L115, and E156.

Belongs to the UbiC family. In terms of assembly, monomer.

The protein localises to the cytoplasm. It catalyses the reaction chorismate = 4-hydroxybenzoate + pyruvate. It functions in the pathway cofactor biosynthesis; ubiquinone biosynthesis. Functionally, removes the pyruvyl group from chorismate, with concomitant aromatization of the ring, to provide 4-hydroxybenzoate (4HB) for the ubiquinone pathway. In Salmonella gallinarum (strain 287/91 / NCTC 13346), this protein is Chorismate pyruvate-lyase.